The primary structure comprises 1153 residues: MVPAPHTQHYSSSTMPNSSSTTAHSAPTTNGDVHAPKDHQLSSPSDTVPAPVNRKKQKRRQKQAARLAERQLANGHVSTDDATQNGSSHTNPERHHSDDGGADGPDHEQPANGDVYPKDGQDSTEAHIDSQNPQGPNGTESSQKSTGRKSKKKKGKKGRNGSHAQGDETSTPMSTPSVSMSHPLPPPLSSHLASHNILKPAKNRSIWNTSTQEERENIKTFWLELGEEERRQLVKVEKDAVLKKMKEQQRHSCSCTVCGRKRTAIEEELEVLYDAYYEELEQYANHNQGSFEKGSPMVPPPRLYQPPLRSPGQHTRTQGQFHPSRGRIHELTEDDDLEENYDEEEDDGDEPYSDEELDEEDEETRAARADFFAFGNSLTVKVADDLLKNDGKHFIDMMEQLAERRMQREEDTQYGIAAAHESLHSGHNHGPFDDEDYDDEEDEDYDSQEEEDYEEDEMDAMTEEQRMEEGRRMFQIFAARMFEQRVLTAYREKVAEQRQQKLIEELMEEETRNEQRNAKKAREAQKRKDKKRLQKQAKEEERARREAEKAAEEAAAKAEQEKKLEEQRKKREEQRKKKEAERKAQEEERARKEAEKLRRQREERERQAEAERKQREEKKRREEARRKEKEERELREKKAKEERDRKAQEQQAKKDTAKGGEEAKDQEKRDDQAKRSSQQVPVPIPTNLHHLQGLSPTVAHSPHVPSATPVLPKAPTPAKPRQPSQQDSHSSSPHSQAPSTDPSQASLSPRSMPVSQSSGVASGNSQQGQGLHAMLHQPQPSTPLSPLGRSIPPGFSSVNGIPPNPPGLSGMVARPPVGHDLPSYPSHSGPFISPFRGYPAPTGIPAPPGINGARPMPPGRGFPLEPAQGFAFHGQQIPGAFSTPQGGLPHRHSRQPSGSLERSPLENHAQPMPISRPSPIKRPSSTQQDQQKGDDRTTQRDVDDLSAHLGSSALLDDSDVSLSSNLSQSLPGATVPGTFSGPARASFGGPSLFPDPLSASGWSNNAFGSGGHHRAHTSRPVAIRLLVIQACKQLNTMSPSKGADGYHDVNLVLRHVEQLRPQNEPSISLKEMLDICDTEGNTQNGGGTFSIRKDETGEFVKFEPDNNSAASGHRGSIVPGEIGSPVPSSSLPAFGGIGTPSVLRQYSSPPMGF.

Disordered stretches follow at residues 1–212 (MVPA…TSTQ), 288–364 (QGSF…DEET), 421–467 (ESLH…EQRM), and 507–941 (MEEE…TQRD). The segment covering 11–30 (SSSTMPNSSSTTAHSAPTTN) has biased composition (low complexity). A compositionally biased stretch (basic residues) spans 53-63 (NRKKQKRRQKQ). Over residues 64 to 73 (AARLAERQLA) the composition is skewed to low complexity. Residues 76–90 (HVSTDDATQNGSSHT) show a composition bias toward polar residues. 2 stretches are compositionally biased toward basic and acidic residues: residues 91–109 (NPER…DHEQ) and 116–128 (YPKD…EAHI). Positions 129–140 (DSQNPQGPNGTE) are enriched in polar residues. Positions 146–160 (TGRKSKKKKGKKGRN) are enriched in basic residues. Over residues 169 to 182 (TSTPMSTPSVSMSH) the composition is skewed to low complexity. Residues 312–321 (GQHTRTQGQF) are compositionally biased toward polar residues. 2 stretches are compositionally biased toward acidic residues: residues 332 to 363 (TEDD…EDEE) and 433 to 462 (DDED…DAMT). A coiled-coil region spans residues 447 to 658 (SQEEEDYEED…EQQAKKDTAK (212 aa)). Composition is skewed to basic and acidic residues over residues 507–526 (MEEE…EAQK) and 536–674 (QAKE…DQAK). Residues 721-739 (RQPSQQDSHSSSPHSQAPS) show a composition bias toward low complexity. A compositionally biased stretch (polar residues) spans 740-769 (TDPSQASLSPRSMPVSQSSGVASGNSQQGQ). The segment covering 913–925 (PISRPSPIKRPSS) has biased composition (low complexity). Residues 931–941 (QKGDDRTTQRD) are compositionally biased toward basic and acidic residues.

Belongs to the NST1 family.

The protein localises to the cytoplasm. Its function is as follows. May act as a negative regulator of salt tolerance. This is Stress response protein nst1 (nst1) from Aspergillus fumigatus (strain ATCC MYA-4609 / CBS 101355 / FGSC A1100 / Af293) (Neosartorya fumigata).